A 402-amino-acid chain; its full sequence is Mitochondrial inner membrane protein OXA1 (402 aa).

The N-terminal 42 residues, 1-42, are a transit peptide targeting the mitochondrion; sequence MFKLTSRLVTSRFAASSRLATARTIVLPRPHPSWISFQAKRF. Over 43 to 118 the chain is Mitochondrial intermembrane; the sequence is NSTGPNANDV…PSDIIQHVLE (76 aa). The helical transmembrane segment at 119 to 139 threads the bilayer; that stretch reads AVHVYSGLPWWGTIAATTILI. At 140–199 the chain is on the mitochondrial matrix side; it reads RCLMFPLYVKSSDTVARNSHIKPELDALNNKLMSTTDLQQGQLVAMQRKKLLSSHGIKNR. The chain crosses the membrane as a helical span at residues 200 to 220; that stretch reads WLAAPMLQIPIALGFFNALRH. Residues 221 to 239 lie on the Mitochondrial intermembrane side of the membrane; it reads MANYPVDGFANQGVAWFTD. Residues 240–260 traverse the membrane as a helical segment; sequence LTQADPYLGLQVITAAVFISF. The Mitochondrial matrix segment spans residues 261-275; sequence TRLGGETGAQQFSSP. The helical transmembrane segment at 276–292 threads the bilayer; sequence MKRLFTILPIISIPATM. The Mitochondrial intermembrane portion of the chain corresponds to 293–297; the sequence is NLSSA. A helical transmembrane segment spans residues 298-316; that stretch reads VVLYFAFNGAFSVLQTMIL. The Mitochondrial matrix portion of the chain corresponds to 317–402; it reads RNKWVRSKLK…HKSNFINNKK (86 aa). The span at 366-385 shows a compositional bias: basic and acidic residues; that stretch reads RQLMQDNEKKLQESFKEKRQ. Positions 366-386 are disordered; that stretch reads RQLMQDNEKKLQESFKEKRQN.

This sequence belongs to the OXA1/ALB3/YidC family. In terms of assembly, interacts with the large ribosome subunit of mitochondrial ribosome. Interacts directly with MRP20. Interacts with OXA1.

It localises to the mitochondrion inner membrane. Mitochondrial inner membrane insertase that mediates the insertion of both mitochondrion-encoded precursors and nuclear-encoded proteins from the matrix into the inner membrane. Links mitoribosomes with the inner membrane. Forms pores capable of accommodating translocating protein segments. Essential for the activity and assembly of cytochrome c oxidase. Plays a central role in the translocation and export of the N-terminal part of the COX2 protein into the mitochondrial intermembrane space. This chain is Mitochondrial inner membrane protein OXA1, found in Saccharomyces cerevisiae (strain ATCC 204508 / S288c) (Baker's yeast).